The following is a 607-amino-acid chain: Rap1 GTPase-GDP dissociation stimulator 1-A (607 aa).

ARM repeat units lie at residues 79-118 (ELMR…NICY), 170-211 (DSLQ…NLAE), 347-390 (DGNC…NLAI), 391-431 (PVVN…MLID), and 479-519 (SKDV…LIAA).

In terms of assembly, interacts with ralB. Probably interacts with the post-translationally isoprenylated (geranyl-geranylation) forms of ral proteins. Interacts with both GDP-bound and GTP-bound forms of ralA, but interaction is much stronger with ralA-GDP. As to expression, weakly expressed in adult tissues with highest levels found in spleen, kidney, skin and A6 cells.

It localises to the cytoplasm. Its subcellular location is the cytosol. The protein localises to the endoplasmic reticulum. It is found in the mitochondrion. Its function is as follows. Stimulates GDP/GTP exchange reaction of a group of small GTP-binding proteins (G proteins) including Rap1a/Rap1b, RhoA, RhoB and KRas, by stimulating the dissociation of GDP from and the subsequent binding of GTP to each small G protein. The sequence is that of Rap1 GTPase-GDP dissociation stimulator 1-A (rap1gds1-a) from Xenopus laevis (African clawed frog).